A 328-amino-acid polypeptide reads, in one-letter code: Beta-ketoacyl-[acyl-carrier-protein] synthase III 2 (328 aa).

Catalysis depends on residues Cys-113 and His-255. Residues 256 to 260 (QANAR) form an ACP-binding region. The active site involves Asn-285.

It belongs to the thiolase-like superfamily. FabH family. Homodimer.

It localises to the cytoplasm. The catalysed reaction is malonyl-[ACP] + acetyl-CoA + H(+) = 3-oxobutanoyl-[ACP] + CO2 + CoA. It functions in the pathway lipid metabolism; fatty acid biosynthesis. Catalyzes the condensation reaction of fatty acid synthesis by the addition to an acyl acceptor of two carbons from malonyl-ACP. Catalyzes the first condensation reaction which initiates fatty acid synthesis and may therefore play a role in governing the total rate of fatty acid production. Possesses both acetoacetyl-ACP synthase and acetyl transacylase activities. Its substrate specificity determines the biosynthesis of branched-chain and/or straight-chain of fatty acids. In Lactiplantibacillus plantarum (strain ATCC BAA-793 / NCIMB 8826 / WCFS1) (Lactobacillus plantarum), this protein is Beta-ketoacyl-[acyl-carrier-protein] synthase III 2.